A 198-amino-acid chain; its full sequence is FMN-dependent NADH:quinone oxidoreductase (198 aa).

FMN-binding positions include serine 10, 16–18, 94–97, and 138–141; these read SQS, MYNF, and TRGG.

Belongs to the azoreductase type 1 family. Homodimer. It depends on FMN as a cofactor.

It carries out the reaction 2 a quinone + NADH + H(+) = 2 a 1,4-benzosemiquinone + NAD(+). The enzyme catalyses N,N-dimethyl-1,4-phenylenediamine + anthranilate + 2 NAD(+) = 2-(4-dimethylaminophenyl)diazenylbenzoate + 2 NADH + 2 H(+). In terms of biological role, quinone reductase that provides resistance to thiol-specific stress caused by electrophilic quinones. Functionally, also exhibits azoreductase activity. Catalyzes the reductive cleavage of the azo bond in aromatic azo compounds to the corresponding amines. This Shewanella baltica (strain OS185) protein is FMN-dependent NADH:quinone oxidoreductase.